Here is a 337-residue protein sequence, read N- to C-terminus: Glyceraldehyde-3-phosphate dehydrogenase (337 aa).

NAD(+) contacts are provided by residues 12–13, D34, and K79; that span reads RI. Residues 150–152, T181, 210–211, and R233 contribute to the D-glyceraldehyde 3-phosphate site; these read SCT and TG. The active-site Nucleophile is the C151. N315 lines the NAD(+) pocket.

Belongs to the glyceraldehyde-3-phosphate dehydrogenase family. In terms of assembly, homotetramer.

Its subcellular location is the cytoplasm. The catalysed reaction is D-glyceraldehyde 3-phosphate + phosphate + NAD(+) = (2R)-3-phospho-glyceroyl phosphate + NADH + H(+). It participates in carbohydrate degradation; glycolysis; pyruvate from D-glyceraldehyde 3-phosphate: step 1/5. This chain is Glyceraldehyde-3-phosphate dehydrogenase (GPD1), found in Cochliobolus heterostrophus (Southern corn leaf blight fungus).